A 255-amino-acid chain; its full sequence is 5-oxoprolinase subunit A (255 aa).

This sequence belongs to the LamB/PxpA family. As to quaternary structure, forms a complex composed of PxpA, PxpB and PxpC.

The enzyme catalyses 5-oxo-L-proline + ATP + 2 H2O = L-glutamate + ADP + phosphate + H(+). Its function is as follows. Catalyzes the cleavage of 5-oxoproline to form L-glutamate coupled to the hydrolysis of ATP to ADP and inorganic phosphate. This chain is 5-oxoprolinase subunit A, found in Thermococcus sibiricus (strain DSM 12597 / MM 739).